A 314-amino-acid polypeptide reads, in one-letter code: MMGQNQTSISDFLLLGLPIQPEQQNLCYALFLAMYLTTLLGNLLIIVLIRLDSHLHTPMYLFLSNLSFSDLCFSSVTIPKLLQNMQNQDPSIPYADCLTQMHFFLLFGDLESFLLVAMAYDRYVAICFPLHYTAIMSPMLCLSVVALSWVLTTFHAMLHTLLMARLCFCADNVIPHFFCDMSALLKLACSDTRVNEWVIFIMGGLIVVIPFLLILGSYARIVSSILKVPSFKGICKALSTCGSHLSVVSLFYGTVIGLYLCPSANSSTLKDTVMAMMYTVVTPMLNPFIYSLRNRDMKGALERVICKRKNPFLL.

The Extracellular portion of the chain corresponds to 1–25; sequence MMGQNQTSISDFLLLGLPIQPEQQN. Asn-5 carries an N-linked (GlcNAc...) asparagine glycan. A helical transmembrane segment spans residues 26–49; that stretch reads LCYALFLAMYLTTLLGNLLIIVLI. Over 50–57 the chain is Cytoplasmic; that stretch reads RLDSHLHT. Residues 58-79 form a helical membrane-spanning segment; the sequence is PMYLFLSNLSFSDLCFSSVTIP. At 80–100 the chain is on the extracellular side; the sequence is KLLQNMQNQDPSIPYADCLTQ. A disulfide bridge links Cys-97 with Cys-189. A helical transmembrane segment spans residues 101 to 120; the sequence is MHFFLLFGDLESFLLVAMAY. At 121 to 139 the chain is on the cytoplasmic side; that stretch reads DRYVAICFPLHYTAIMSPM. The helical transmembrane segment at 140–158 threads the bilayer; it reads LCLSVVALSWVLTTFHAML. The Extracellular portion of the chain corresponds to 159-196; the sequence is HTLLMARLCFCADNVIPHFFCDMSALLKLACSDTRVNE. Residues 197–219 form a helical membrane-spanning segment; sequence WVIFIMGGLIVVIPFLLILGSYA. At 220–236 the chain is on the cytoplasmic side; the sequence is RIVSSILKVPSFKGICK. A helical membrane pass occupies residues 237 to 260; it reads ALSTCGSHLSVVSLFYGTVIGLYL. The Extracellular segment spans residues 261-272; that stretch reads CPSANSSTLKDT. N-linked (GlcNAc...) asparagine glycosylation is present at Asn-265. The chain crosses the membrane as a helical span at residues 273–292; that stretch reads VMAMMYTVVTPMLNPFIYSL. Residues 293–314 are Cytoplasmic-facing; sequence RNRDMKGALERVICKRKNPFLL.

This sequence belongs to the G-protein coupled receptor 1 family.

The protein localises to the cell membrane. In terms of biological role, odorant receptor. The polypeptide is Olfactory receptor 1E2 (OR1E2) (Pan troglodytes (Chimpanzee)).